Reading from the N-terminus, the 509-residue chain is Maturase K (509 aa).

Belongs to the intron maturase 2 family. MatK subfamily.

Its subcellular location is the plastid. The protein localises to the chloroplast. Functionally, usually encoded in the trnK tRNA gene intron. Probably assists in splicing its own and other chloroplast group II introns. The sequence is that of Maturase K from Jacaranda mimosifolia (Jacaranda).